The chain runs to 481 residues: Deoxyribodipyrimidine photo-lyase (481 aa).

Positions 1 to 136 (MQLFWHRRDL…AHAQFHDAVH (136 aa)) constitute a Photolyase/cryptochrome alpha/beta domain. Position 228 (Tyr-228) interacts with FAD. Arg-232 lines the DNA pocket. 240-244 (TSRLS) contacts FAD. Interaction with DNA stretches follow at residues 283-290 (QLAWREFY) and 349-350 (NR). 380–382 (DHD) provides a ligand contact to FAD. Residue Gln-412 coordinates DNA.

Belongs to the DNA photolyase class-1 family. As to quaternary structure, monomer. Requires FAD as cofactor. Coenzyme F420-(gamma-Glu)n serves as cofactor.

It carries out the reaction cyclobutadipyrimidine (in DNA) = 2 pyrimidine residues (in DNA).. In terms of biological role, involved in repair of UV radiation-induced DNA damage. Catalyzes the light-dependent monomerization (300-600 nm) of cyclobutyl pyrimidine dimers (in cis-syn configuration), which are formed between adjacent bases on the same DNA strand upon exposure to ultraviolet radiation. This chain is Deoxyribodipyrimidine photo-lyase (phr), found in Halobacterium salinarum (strain ATCC 700922 / JCM 11081 / NRC-1) (Halobacterium halobium).